A 277-amino-acid polypeptide reads, in one-letter code: Putative pyruvate, phosphate dikinase regulatory protein (277 aa).

151-158 (GISRTSKT) is an ADP binding site.

The protein belongs to the pyruvate, phosphate/water dikinase regulatory protein family. PDRP subfamily.

It catalyses the reaction N(tele)-phospho-L-histidyl/L-threonyl-[pyruvate, phosphate dikinase] + ADP = N(tele)-phospho-L-histidyl/O-phospho-L-threonyl-[pyruvate, phosphate dikinase] + AMP + H(+). It carries out the reaction N(tele)-phospho-L-histidyl/O-phospho-L-threonyl-[pyruvate, phosphate dikinase] + phosphate + H(+) = N(tele)-phospho-L-histidyl/L-threonyl-[pyruvate, phosphate dikinase] + diphosphate. Bifunctional serine/threonine kinase and phosphorylase involved in the regulation of the pyruvate, phosphate dikinase (PPDK) by catalyzing its phosphorylation/dephosphorylation. This Alkaliphilus metalliredigens (strain QYMF) protein is Putative pyruvate, phosphate dikinase regulatory protein.